Consider the following 616-residue polypeptide: Chaperone protein HscA (616 aa).

Belongs to the heat shock protein 70 family.

Its function is as follows. Chaperone involved in the maturation of iron-sulfur cluster-containing proteins. Has a low intrinsic ATPase activity which is markedly stimulated by HscB. Involved in the maturation of IscU. This is Chaperone protein HscA from Escherichia coli O139:H28 (strain E24377A / ETEC).